We begin with the raw amino-acid sequence, 142 residues long: Hemoglobin subunit alpha-2 (142 aa).

Positions 2-142 (VLSAADKSNV…VSTVLTSKYR (141 aa)) constitute a Globin domain. His-59 contacts O2. Position 88 (His-88) interacts with heme b.

Belongs to the globin family. As to quaternary structure, heterotetramer of two alpha chains and two beta chains.

In terms of biological role, involved in oxygen transport from the lung to the various peripheral tissues. Functionally, hemopressin acts as an antagonist peptide of the cannabinoid receptor CNR1. Hemopressin-binding efficiently blocks cannabinoid receptor CNR1 and subsequent signaling. This is Hemoglobin subunit alpha-2 (HBA2) from Capra hircus (Goat).